The following is a 451-amino-acid chain: Tubulin alpha-2 chain (451 aa).

Glutamine 11 is a binding site for GTP. Residue lysine 40 is modified to N6-acetyllysine. The GTP site is built by glutamate 71, glycine 144, threonine 145, threonine 179, asparagine 206, and asparagine 228. Mg(2+) is bound at residue glutamate 71. Residue glutamate 254 is part of the active site.

Belongs to the tubulin family. Dimer of alpha and beta chains. A typical microtubule is a hollow water-filled tube with an outer diameter of 25 nm and an inner diameter of 15 nM. Alpha-beta heterodimers associate head-to-tail to form protofilaments running lengthwise along the microtubule wall with the beta-tubulin subunit facing the microtubule plus end conferring a structural polarity. Microtubules usually have 13 protofilaments but different protofilament numbers can be found in some organisms and specialized cells. Mg(2+) serves as cofactor. Undergoes a tyrosination/detyrosination cycle, the cyclic removal and re-addition of a C-terminal tyrosine residue by the enzymes tubulin tyrosine carboxypeptidase (TTCP) and tubulin tyrosine ligase (TTL), respectively.

It is found in the cytoplasm. It localises to the cytoskeleton. It carries out the reaction GTP + H2O = GDP + phosphate + H(+). Functionally, tubulin is the major constituent of microtubules, a cylinder consisting of laterally associated linear protofilaments composed of alpha- and beta-tubulin heterodimers. Microtubules grow by the addition of GTP-tubulin dimers to the microtubule end, where a stabilizing cap forms. Below the cap, tubulin dimers are in GDP-bound state, owing to GTPase activity of alpha-tubulin. The sequence is that of Tubulin alpha-2 chain (TUBA2) from Chlamydomonas reinhardtii (Chlamydomonas smithii).